We begin with the raw amino-acid sequence, 647 residues long: Protein arginine N-methyltransferase 7 (647 aa).

SAM-dependent MTase PRMT-type domains are found at residues 12-332 and 337-647; these read EREW…FSLW and GKDK…SEDS. Active-site residues include glutamate 140 and glutamate 149.

This sequence belongs to the class I-like SAM-binding methyltransferase superfamily. Protein arginine N-methyltransferase family. PRMT7 subfamily.

Its function is as follows. Arginine methyltransferase that can both catalyze the formation of omega-N monomethylarginine (MMA) and symmetrical dimethylarginine (sDMA). This chain is Protein arginine N-methyltransferase 7 (prmt-7), found in Caenorhabditis elegans.